A 569-amino-acid polypeptide reads, in one-letter code: CTP synthase (569 aa).

In terms of domain architecture, Glutamine amidotransferase type-1 spans 313–569 (RIAMVGKYTG…NASLERLKKM (257 aa)). Cys-410 functions as the Nucleophile in the catalytic mechanism. Catalysis depends on residues His-541 and Glu-543.

The protein belongs to the CTP synthase family.

The catalysed reaction is UTP + L-glutamine + ATP + H2O = CTP + L-glutamate + ADP + phosphate + 2 H(+). Its pathway is pyrimidine metabolism; CTP biosynthesis via de novo pathway; CTP from UDP: step 2/2. Functionally, catalyzes the ATP-dependent amination of UTP to CTP with either L-glutamine or ammonia as the source of nitrogen. This Dictyostelium discoideum (Social amoeba) protein is CTP synthase (ctps).